A 123-amino-acid polypeptide reads, in one-letter code: Small ribosomal subunit protein uS12cz/uS12cy (123 aa).

It belongs to the universal ribosomal protein uS12 family. As to quaternary structure, part of the 30S ribosomal subunit.

It localises to the plastid. It is found in the chloroplast. In terms of biological role, with S4 and S5 plays an important role in translational accuracy. Located at the interface of the 30S and 50S subunits. This chain is Small ribosomal subunit protein uS12cz/uS12cy (rps12-A), found in Arabis hirsuta (Hairy rock-cress).